The following is a 451-amino-acid chain: Phosphoglucosamine mutase (451 aa).

Ser-102 serves as the catalytic Phosphoserine intermediate. The Mg(2+) site is built by Ser-102, Asp-242, Asp-244, and Asp-246. At Ser-102 the chain carries Phosphoserine.

The protein belongs to the phosphohexose mutase family. It depends on Mg(2+) as a cofactor. In terms of processing, activated by phosphorylation.

The catalysed reaction is alpha-D-glucosamine 1-phosphate = D-glucosamine 6-phosphate. Functionally, catalyzes the conversion of glucosamine-6-phosphate to glucosamine-1-phosphate. The polypeptide is Phosphoglucosamine mutase (Staphylococcus aureus (strain Mu3 / ATCC 700698)).